Here is a 213-residue protein sequence, read N- to C-terminus: Adenylate kinase (213 aa).

10 to 15 (GSGKGS) provides a ligand contact to ATP. An NMP region spans residues 30-60 (STGNLFRAILKEDSELARKIKEINVSGGKLV). AMP-binding positions include T31, R36, 58-60 (KLV), 87-90 (GYPR), and Q94. The tract at residues 123–160 (GRWMCPKCAGIYNIHFKKPQVDGVCDNDQATLYQRADD) is LID. An ATP-binding site is contributed by R124. Positions 127 and 130 each coordinate Zn(2+). 133 to 134 (IY) is a binding site for ATP. The Zn(2+) site is built by C147 and D150. Positions 157 and 168 each coordinate AMP. Residue Q196 participates in ATP binding.

The protein belongs to the adenylate kinase family. As to quaternary structure, monomer.

The protein localises to the cytoplasm. It catalyses the reaction AMP + ATP = 2 ADP. It participates in purine metabolism; AMP biosynthesis via salvage pathway; AMP from ADP: step 1/1. Functionally, catalyzes the reversible transfer of the terminal phosphate group between ATP and AMP. Plays an important role in cellular energy homeostasis and in adenine nucleotide metabolism. This Ureaplasma urealyticum serovar 10 (strain ATCC 33699 / Western) protein is Adenylate kinase.